The following is a 205-amino-acid chain: ITG-like peptide (205 aa).

The N-terminal stretch at 1 to 15 is a signal peptide; sequence MRVYAAITLVLVANT. Propeptides lie at residues 16–188 and 202–205; these read AYIG…TSGE and MPFA.

In terms of tissue distribution, expressed throughout the nervous system (at protein level).

The protein resides in the secreted. This chain is ITG-like peptide, found in Camponotus floridanus (Florida carpenter ant).